A 176-amino-acid chain; its full sequence is Crossover junction endodeoxyribonuclease RuvC (176 aa).

Catalysis depends on residues aspartate 7, glutamate 68, and aspartate 141. The Mg(2+) site is built by aspartate 7, glutamate 68, and aspartate 141.

Belongs to the RuvC family. Homodimer which binds Holliday junction (HJ) DNA. The HJ becomes 2-fold symmetrical on binding to RuvC with unstacked arms; it has a different conformation from HJ DNA in complex with RuvA. In the full resolvosome a probable DNA-RuvA(4)-RuvB(12)-RuvC(2) complex forms which resolves the HJ. Mg(2+) serves as cofactor.

It localises to the cytoplasm. It carries out the reaction Endonucleolytic cleavage at a junction such as a reciprocal single-stranded crossover between two homologous DNA duplexes (Holliday junction).. Functionally, the RuvA-RuvB-RuvC complex processes Holliday junction (HJ) DNA during genetic recombination and DNA repair. Endonuclease that resolves HJ intermediates. Cleaves cruciform DNA by making single-stranded nicks across the HJ at symmetrical positions within the homologous arms, yielding a 5'-phosphate and a 3'-hydroxyl group; requires a central core of homology in the junction. The consensus cleavage sequence is 5'-(A/T)TT(C/G)-3'. Cleavage occurs on the 3'-side of the TT dinucleotide at the point of strand exchange. HJ branch migration catalyzed by RuvA-RuvB allows RuvC to scan DNA until it finds its consensus sequence, where it cleaves and resolves the cruciform DNA. The sequence is that of Crossover junction endodeoxyribonuclease RuvC from Streptomyces avermitilis (strain ATCC 31267 / DSM 46492 / JCM 5070 / NBRC 14893 / NCIMB 12804 / NRRL 8165 / MA-4680).